The primary structure comprises 110 residues: Small ribosomal subunit protein uS17 (110 aa).

The protein belongs to the universal ribosomal protein uS17 family. As to quaternary structure, part of the 30S ribosomal subunit.

In terms of biological role, one of the primary rRNA binding proteins, it binds specifically to the 5'-end of 16S ribosomal RNA. The sequence is that of Small ribosomal subunit protein uS17 from Petrotoga mobilis (strain DSM 10674 / SJ95).